The sequence spans 218 residues: MTTSRCSHLPEVLPDCTSSAAPVVKTVEDCGSLVNGQPQYVMQVSAKDGQLLSTVVRTLATQSPFNDRPMCRICHEGSSQEDLLSPCECTGTLGTIHRSCLEHWLSSSNTSYCELCHFRFAVERKPRPLVEWLRNPGPQHEKRTLFGDMVCFLFITPLATISGWLCLRGAVDHLHFSSRLEAVGLIALTVALFTIYLFWTLRRYGHQSKPFWNQSSRS.

The segment at Ser63–Glu123 adopts an RING-CH-type zinc-finger fold. Positions 71, 74, 87, 89, 97, 100, 113, and 116 each coordinate Zn(2+). The next 2 helical transmembrane spans lie at Leu145–Leu165 and Leu180–Thr200.

In terms of assembly, interacts with MARCHF2 and STX6.

It is found in the cytoplasmic vesicle membrane. Its subcellular location is the early endosome membrane. It carries out the reaction S-ubiquitinyl-[E2 ubiquitin-conjugating enzyme]-L-cysteine + [acceptor protein]-L-lysine = [E2 ubiquitin-conjugating enzyme]-L-cysteine + N(6)-ubiquitinyl-[acceptor protein]-L-lysine.. It participates in protein modification; protein ubiquitination. Functionally, E3 ubiquitin-protein ligase which may be involved in endosomal trafficking. E3 ubiquitin ligases accept ubiquitin from an E2 ubiquitin-conjugating enzyme in the form of a thioester and then directly transfer the ubiquitin to targeted substrates. In Mus musculus (Mouse), this protein is E3 ubiquitin-protein ligase MARCHF3 (Marchf3).